Consider the following 209-residue polypeptide: ATP-dependent Clp protease proteolytic subunit (209 aa).

The active-site Nucleophile is Ser106. His131 is an active-site residue.

The protein belongs to the peptidase S14 family. In terms of assembly, fourteen ClpP subunits assemble into 2 heptameric rings which stack back to back to give a disk-like structure with a central cavity, resembling the structure of eukaryotic proteasomes.

The protein localises to the cytoplasm. The enzyme catalyses Hydrolysis of proteins to small peptides in the presence of ATP and magnesium. alpha-casein is the usual test substrate. In the absence of ATP, only oligopeptides shorter than five residues are hydrolyzed (such as succinyl-Leu-Tyr-|-NHMec, and Leu-Tyr-Leu-|-Tyr-Trp, in which cleavage of the -Tyr-|-Leu- and -Tyr-|-Trp bonds also occurs).. Cleaves peptides in various proteins in a process that requires ATP hydrolysis. Has a chymotrypsin-like activity. Plays a major role in the degradation of misfolded proteins. The sequence is that of ATP-dependent Clp protease proteolytic subunit from Caulobacter vibrioides (strain ATCC 19089 / CIP 103742 / CB 15) (Caulobacter crescentus).